A 52-amino-acid chain; its full sequence is Small ribosomal subunit protein uS14 (52 aa).

4 residues coordinate Zn(2+): C17, C20, C35, and C38.

This sequence belongs to the universal ribosomal protein uS14 family. Zinc-binding uS14 subfamily. Part of the 30S ribosomal subunit. It depends on Zn(2+) as a cofactor.

Functionally, binds 16S rRNA, required for the assembly of 30S particles. The polypeptide is Small ribosomal subunit protein uS14 (Halobacterium salinarum (strain ATCC 700922 / JCM 11081 / NRC-1) (Halobacterium halobium)).